Consider the following 138-residue polypeptide: Large ribosomal subunit protein bL19 (138 aa).

This sequence belongs to the bacterial ribosomal protein bL19 family.

This protein is located at the 30S-50S ribosomal subunit interface and may play a role in the structure and function of the aminoacyl-tRNA binding site. This chain is Large ribosomal subunit protein bL19, found in Rickettsia peacockii (strain Rustic).